A 242-amino-acid chain; its full sequence is MEGWQRAFVLHSRPWSETSLMLDVFTEESGRVRLVAKGARSKRSTLKGALQPFTPLLLRFGGRGEVKTLRSAEAVSLALPLSGITLYSGLYINELLSRVLEYETRFSELFFDYLHCIQSLAGVTGTPEPALRRFELALLGHLGYGVNFTHCAGSGEPVDDTMTYRYREEKGFIASVVIDNKTFTGRQLKALNAREFPDADTLRAAKRFTRMALKPYLGGKPLKSRELFRQFMPKRTVKTHYE.

It belongs to the RecO family. In terms of assembly, monomer.

Its function is as follows. Involved in DNA repair and RecF pathway recombination. The sequence is that of DNA repair protein RecO from Shigella dysenteriae serotype 1 (strain Sd197).